The chain runs to 97 residues: MKIEHYIILMVILVGFVTMPLLIPTIKTTQTYSIFNTQENGCSNFLKLMHNSNTIKPLIYPYSNLRDNSILFIIGPDVEFSEDEGHLLRNYVYAGNI.

This is an uncharacterized protein from Methanothermococcus thermolithotrophicus (Methanococcus thermolithotrophicus).